Reading from the N-terminus, the 108-residue chain is Pyrimidine/purine nucleoside phosphorylase (108 aa).

Belongs to the nucleoside phosphorylase PpnP family.

It carries out the reaction a purine D-ribonucleoside + phosphate = a purine nucleobase + alpha-D-ribose 1-phosphate. The enzyme catalyses adenosine + phosphate = alpha-D-ribose 1-phosphate + adenine. It catalyses the reaction cytidine + phosphate = cytosine + alpha-D-ribose 1-phosphate. The catalysed reaction is guanosine + phosphate = alpha-D-ribose 1-phosphate + guanine. It carries out the reaction inosine + phosphate = alpha-D-ribose 1-phosphate + hypoxanthine. The enzyme catalyses thymidine + phosphate = 2-deoxy-alpha-D-ribose 1-phosphate + thymine. It catalyses the reaction uridine + phosphate = alpha-D-ribose 1-phosphate + uracil. The catalysed reaction is xanthosine + phosphate = alpha-D-ribose 1-phosphate + xanthine. Catalyzes the phosphorolysis of diverse nucleosides, yielding D-ribose 1-phosphate and the respective free bases. Can use uridine, adenosine, guanosine, cytidine, thymidine, inosine and xanthosine as substrates. Also catalyzes the reverse reactions. In Polaromonas sp. (strain JS666 / ATCC BAA-500), this protein is Pyrimidine/purine nucleoside phosphorylase.